A 953-amino-acid polypeptide reads, in one-letter code: 26S proteasome non-ATPase regulatory subunit 1 (953 aa).

Met1 is subject to N-acetylmethionine; partial. Phosphothreonine is present on Thr273. Positions 279–318 (PGSTNTGTVPGSEKDSDSMETEEKTGSAFVGKTPEASPEP) are disordered. Residue Ser290 is modified to Phosphoserine. A compositionally biased stretch (basic and acidic residues) spans 290–303 (SEKDSDSMETEEKT). Lys310 carries the post-translational modification N6-acetyllysine. Thr311 is subject to Phosphothreonine. Ser315 is modified (phosphoserine). PC repeat units lie at residues 403-436 (TATA…PGSA), 441-474 (GGLY…DIVR), 476-510 (GGSL…VTGE), 511-545 (AAGL…EKIL), 547-580 (GLAV…ILRR), 581-616 (SGMY…DVRR), 617-649 (AAVE…PHVR), 651-685 (GAAM…YVRQ), 686-726 (GALI…DVMA), and 729-761 (GAIL…PSVV). The residue at position 720 (Lys720) is an N6-acetyllysine. Thr830 is modified (phosphothreonine). Phosphoserine is present on Ser834. 2 disordered regions span residues 839-881 (AKKK…LDNP) and 930-953 (AHGP…YIDD). 2 stretches are compositionally biased toward basic and acidic residues: residues 842–852 (KEKEKEKKEEE) and 859–872 (AEKK…KEPE). The span at 936 to 953 (EEEEQEPEPPEPFEYIDD) shows a compositional bias: acidic residues.

Belongs to the proteasome subunit S1 family. Component of the 19S proteasome regulatory particle complex. The 26S proteasome consists of a 20S core particle (CP) and two 19S regulatory subunits (RP). The regulatory particle is made of a lid composed of 9 subunits, a base containing 6 ATPases and few additional components including PSMD1. Interacts with ADRM1. Interacts with ZFAND1.

Functionally, component of the 26S proteasome, a multiprotein complex involved in the ATP-dependent degradation of ubiquitinated proteins. This complex plays a key role in the maintenance of protein homeostasis by removing misfolded or damaged proteins, which could impair cellular functions, and by removing proteins whose functions are no longer required. Therefore, the proteasome participates in numerous cellular processes, including cell cycle progression, apoptosis, or DNA damage repair. This chain is 26S proteasome non-ATPase regulatory subunit 1 (PSMD1), found in Pongo abelii (Sumatran orangutan).